Reading from the N-terminus, the 295-residue chain is Protein SSO2 (295 aa).

Residues M1 to R269 lie on the Cytoplasmic side of the membrane. Phosphoserine occurs at positions 31 and 34. The stretch at A39–A100 forms a coiled coil. The t-SNARE coiled-coil homology domain occupies L194–A256. Residues C270–V291 traverse the membrane as a helical; Anchor for type IV membrane protein segment. Residues E292 to K295 lie on the Extracellular side of the membrane.

It belongs to the syntaxin family.

The protein localises to the membrane. Functionally, required for vesicle fusion with the plasma membrane. The polypeptide is Protein SSO2 (SSO2) (Saccharomyces cerevisiae (strain ATCC 204508 / S288c) (Baker's yeast)).